Here is a 116-residue protein sequence, read N- to C-terminus: CDKN2AIP N-terminal-like protein (116 aa).

Methionine 1 bears the N-acetylmethionine mark. An XRN2-binding (XTBD) domain is found at alanine 24–serine 116.

It belongs to the CARF family. Interacts with XRN2; the interaction is direct.

In Mus musculus (Mouse), this protein is CDKN2AIP N-terminal-like protein (Cdkn2aipnl).